Consider the following 215-residue polypeptide: Large ribosomal subunit protein uL4 (215 aa).

The interval Thr46–Arg72 is disordered. The segment covering Ser56–Ala71 has biased composition (gly residues).

The protein belongs to the universal ribosomal protein uL4 family. Part of the 50S ribosomal subunit.

Functionally, one of the primary rRNA binding proteins, this protein initially binds near the 5'-end of the 23S rRNA. It is important during the early stages of 50S assembly. It makes multiple contacts with different domains of the 23S rRNA in the assembled 50S subunit and ribosome. Forms part of the polypeptide exit tunnel. The polypeptide is Large ribosomal subunit protein uL4 (Helicobacter pylori (strain J99 / ATCC 700824) (Campylobacter pylori J99)).